Here is an 89-residue protein sequence, read N- to C-terminus: MANHKSAIKRHRQSVERAGRNRAARTRVKNAIKQVRTAITGSDKAQAGEALVAATSVLSKAASKGAMHWKKAARKISRLARAVNSIEAQ.

Residues Met1–Arg12 show a composition bias toward basic residues. Positions Met1–Thr26 are disordered.

This sequence belongs to the bacterial ribosomal protein bS20 family.

Functionally, binds directly to 16S ribosomal RNA. This chain is Small ribosomal subunit protein bS20, found in Desulfovibrio desulfuricans (strain ATCC 27774 / DSM 6949 / MB).